A 329-amino-acid polypeptide reads, in one-letter code: Cytosolic sulfotransferase 6 (329 aa).

74 to 79 (KCGTTW) contacts 3'-phosphoadenylyl sulfate. The Proton acceptor role is filled by His-140. Residues Arg-162, Ser-170, and 295–297 (RKG) each bind 3'-phosphoadenylyl sulfate.

The protein belongs to the sulfotransferase 1 family.

It localises to the cytoplasm. Sulfotransferase that utilizes 3'-phospho-5'-adenylyl sulfate (PAPS) as sulfonate donor. This chain is Cytosolic sulfotransferase 6 (SOT6), found in Arabidopsis thaliana (Mouse-ear cress).